The following is an 823-amino-acid chain: Dimethyl sulfoxide/trimethylamine N-oxide reductase (823 aa).

The tat-type signal signal peptide spans 1–42 (MTKFSGNELRAELYRRAFLSYSVAPGALGMFGRSLLAKGARA). Residues 156 to 160 (YGWKS), tryptophan 158, serine 189, 232 to 233 (KT), 262 to 263 (ID), 283 to 285 (QTD), 364 to 365 (WS), arginine 368, asparagine 476, histidine 480, 500 to 501 (HD), arginine 523, aspartate 553, 685 to 686 (HP), 691 to 693 (HSQ), asparagine 779, and 796 to 797 (GQ) contribute to the Mo-bis(molybdopterin guanine dinucleotide) site.

In terms of assembly, homodimer. The cofactor is Mo-bis(molybdopterin guanine dinucleotide). Predicted to be exported by the Tat system. The position of the signal peptide cleavage has been experimentally proven.

It localises to the periplasm. The catalysed reaction is dimethyl sulfide + a menaquinone + H2O = dimethyl sulfoxide + a menaquinol. The enzyme catalyses trimethylamine + 2 Fe(III)-[cytochrome c] + H2O = trimethylamine N-oxide + 2 Fe(II)-[cytochrome c] + 3 H(+). In terms of biological role, catalyzes the reduction of dimethyl sulfoxide (DMSO) and trimethylamine N-oxide (TMAO) to dimethyl sulfide (DMS) and trimethylamine, respectively. The terminal DMSO reductase can also use various sulfoxides and N-oxide compounds as terminal electron acceptor in addition to DMSO and TMAO. The polypeptide is Dimethyl sulfoxide/trimethylamine N-oxide reductase (dorA) (Rhodobacter capsulatus (Rhodopseudomonas capsulata)).